Here is a 475-residue protein sequence, read N- to C-terminus: Ribulose bisphosphate carboxylase large chain (475 aa).

Positions 123 and 173 each coordinate substrate. Catalysis depends on Lys175, which acts as the Proton acceptor. Lys177 contributes to the substrate binding site. Positions 201, 203, and 204 each coordinate Mg(2+). Lys201 is subject to N6-carboxylysine. The Proton acceptor role is filled by His294. 3 residues coordinate substrate: Arg295, His327, and Ser379.

It belongs to the RuBisCO large chain family. Type I subfamily. Heterohexadecamer of 8 large chains and 8 small chains. Mg(2+) serves as cofactor.

The protein resides in the plastid. It is found in the chloroplast. The enzyme catalyses 2 (2R)-3-phosphoglycerate + 2 H(+) = D-ribulose 1,5-bisphosphate + CO2 + H2O. The catalysed reaction is D-ribulose 1,5-bisphosphate + O2 = 2-phosphoglycolate + (2R)-3-phosphoglycerate + 2 H(+). RuBisCO catalyzes two reactions: the carboxylation of D-ribulose 1,5-bisphosphate, the primary event in carbon dioxide fixation, as well as the oxidative fragmentation of the pentose substrate in the photorespiration process. Both reactions occur simultaneously and in competition at the same active site. This is Ribulose bisphosphate carboxylase large chain from Bigelowiella natans (Pedinomonas minutissima).